A 245-amino-acid chain; its full sequence is 2,3-bisphosphoglycerate-dependent phosphoglycerate mutase (245 aa).

Substrate-binding positions include 8-15 (RHGQSLWN), 21-22 (TG), Arg-60, 87-90 (ERHY), Lys-98, 114-115 (RR), and 183-184 (GN). His-9 serves as the catalytic Tele-phosphohistidine intermediate. Glu-87 serves as the catalytic Proton donor/acceptor.

The protein belongs to the phosphoglycerate mutase family. BPG-dependent PGAM subfamily.

The enzyme catalyses (2R)-2-phosphoglycerate = (2R)-3-phosphoglycerate. It functions in the pathway carbohydrate degradation; glycolysis; pyruvate from D-glyceraldehyde 3-phosphate: step 3/5. Functionally, catalyzes the interconversion of 2-phosphoglycerate and 3-phosphoglycerate. The sequence is that of 2,3-bisphosphoglycerate-dependent phosphoglycerate mutase from Bacillus thuringiensis subsp. konkukian (strain 97-27).